Reading from the N-terminus, the 262-residue chain is Tryptophan synthase alpha chain (262 aa).

Active-site proton acceptor residues include Glu-48 and Asp-59.

This sequence belongs to the TrpA family. Tetramer of two alpha and two beta chains.

The enzyme catalyses (1S,2R)-1-C-(indol-3-yl)glycerol 3-phosphate + L-serine = D-glyceraldehyde 3-phosphate + L-tryptophan + H2O. It participates in amino-acid biosynthesis; L-tryptophan biosynthesis; L-tryptophan from chorismate: step 5/5. The alpha subunit is responsible for the aldol cleavage of indoleglycerol phosphate to indole and glyceraldehyde 3-phosphate. This is Tryptophan synthase alpha chain from Helicobacter pylori (strain ATCC 700392 / 26695) (Campylobacter pylori).